The sequence spans 296 residues: Acetylglutamate kinase (296 aa).

Residues 68–69 (GG), Arg90, and Asn193 contribute to the substrate site.

This sequence belongs to the acetylglutamate kinase family. ArgB subfamily.

Its subcellular location is the cytoplasm. It catalyses the reaction N-acetyl-L-glutamate + ATP = N-acetyl-L-glutamyl 5-phosphate + ADP. Its pathway is amino-acid biosynthesis; L-arginine biosynthesis; N(2)-acetyl-L-ornithine from L-glutamate: step 2/4. In terms of biological role, catalyzes the ATP-dependent phosphorylation of N-acetyl-L-glutamate. This is Acetylglutamate kinase from Acidothermus cellulolyticus (strain ATCC 43068 / DSM 8971 / 11B).